Here is a 105-residue protein sequence, read N- to C-terminus: MRQFNLLLVFCLIALTALPVFSFPNGLTMDSIDMEPMGAFDENGAADESPRVKRYGGWGGRGGWGRGGGRGYGGRGGGWGGRGGGWGRGGGGRGFYGGGRRGWGK.

The first 22 residues, 1–22 (MRQFNLLLVFCLIALTALPVFS), serve as a signal peptide directing secretion. A propeptide spanning residues 23–54 (FPNGLTMDSIDMEPMGAFDENGAADESPRVKR) is cleaved from the precursor. Gly59 carries the post-translational modification Glycine amide. Position 64 is a tryptophan amide (Trp64). Glycine amide is present on residues Gly68, Gly73, and Gly80. Tryptophan amide is present on Trp86. A glycine amide mark is found at Gly91 and Gly98. Tryptophan amide is present on Trp103.

Belongs to the YARP (YGGW-amide related peptide) family.

The protein resides in the secreted. Functionally, may have antimicrobial activity. This Caenorhabditis elegans protein is Neuropeptide-like protein 32 (nlp-32).